Here is a 355-residue protein sequence, read N- to C-terminus: NAD-dependent protein deacylase sirtuin-6 (355 aa).

Position 2 is an N-acetylserine (S2). Residue S10 is modified to Phosphoserine. The Deacetylase sirtuin-type domain occupies 27 to 272 (PEELERKVWE…TQLMKHLGLE (246 aa)). N6-acetyllysine is present on K33. Residues A53, T57, F64, R65, W71, Q113, and H133 each contribute to the NAD(+) site. The active-site Proton acceptor is the H133. Residues C141, C144, and C166 each coordinate Zn(2+). Residue K170 forms a Glycyl lysine isopeptide (Lys-Gly) (interchain with G-Cter in ubiquitin) linkage. Residue C177 participates in Zn(2+) binding. G214, S216, N240, Q242, and V258 together coordinate NAD(+). Positions 284–355 (KALPPLPRPP…KRVKAEVTPS (72 aa)) are disordered. Pro residues predominate over residues 287–296 (PPLPRPPTPK). Phosphothreonine is present on T294. A phosphoserine mark is found at S303 and S330.

This sequence belongs to the sirtuin family. Class IV subfamily. In terms of assembly, homodimer; binds to nucleosomes and DNA ends as a homodimer. Interacts with RELA; interferes with RELA binding to target DNA. Interacts with SMARCA5; promoting recruitment of SMARCA5/SNF2H to double-strand breaks (DSBs) sites. Interacts with the mTORC2 complex; preventing the ability of SIRT6 to deacetylate FOXO1. Interacts with the CLOCK-BMAL1 complex; recruited by the CLOCK-BMAL1 complex to regulate expression of clock-controlled genes. Interacts with CSNK2A2; preventing CSNK2A2 localization to the nucleus. Acetylated at Lys-33. Deacetylation at Lys-33 by SIRT1 promotes homomultimerization and binding to double-strand breaks (DSBs) sites. In terms of processing, phosphorylation at Ser-10 by MAPK8/JNK1 in response to oxidative stress stimulates the mono-ADP-ribosyltransferase activity on PARP1, leading to PARP1 recruitment to double-strand breaks (DSBs). Post-translationally, monoubiquitinated at Lys-170 by STUB1/CHIP, preventing its degradation by the proteasome. Sumoylated, leading to specifically decrease ability to deacetylate histone H3 at 'Lys-56' (H3K56ac).

The protein localises to the nucleus. The protein resides in the chromosome. Its subcellular location is the telomere. It is found in the endoplasmic reticulum. It catalyses the reaction N(6)-acetyl-L-lysyl-[protein] + NAD(+) + H2O = 2''-O-acetyl-ADP-D-ribose + nicotinamide + L-lysyl-[protein]. The catalysed reaction is N(6)-tetradecanoyl-L-lysyl-[protein] + NAD(+) + H2O = 2''-O-tetradecanoyl-ADP-D-ribose + nicotinamide + L-lysyl-[protein]. The enzyme catalyses N(6)-hexadecanoyl-L-lysyl-[protein] + NAD(+) + H2O = 2''-O-hexadecanoyl-ADP-D-ribose + nicotinamide + L-lysyl-[protein]. It carries out the reaction L-lysyl-[protein] + NAD(+) = N(6)-(ADP-D-ribosyl)-L-lysyl-[protein] + nicotinamide + H(+). It catalyses the reaction L-arginyl-[protein] + NAD(+) = N(omega)-(ADP-D-ribosyl)-L-arginyl-[protein] + nicotinamide + H(+). With respect to regulation, compared to the defatty-acylase activity, the protein deacetylase activity is weak in vitro, and requires activation. The histone deacetylase activity is strongly activated upon binding to nucleosomes and chromatin in vivo. Two molecules of SIRT6 associate with the acidic patch of one nucleosome, while the C-terminal disordered region of SIRT6 associates with nucleosomal DNA, leading to efficient histone deacetylation. The protein-lysine deacetylase activity is also activated by long-chain free fatty-acids. Its function is as follows. NAD-dependent protein deacetylase, deacylase and mono-ADP-ribosyltransferase that plays an essential role in DNA damage repair, telomere maintenance, metabolic homeostasis, inflammation, tumorigenesis and aging. Displays protein-lysine deacetylase or defatty-acylase (demyristoylase and depalmitoylase) activity, depending on the context. Acts as a key histone deacetylase by catalyzing deacetylation of histone H3 at 'Lys-9', 'Lys-18' and 'Lys-56' (H3K9ac, H3K18ac and H3K56ac, respectively), suppressing target gene expression of several transcription factors, including NF-kappa-B. Acts as an inhibitor of transcription elongation by mediating deacetylation of H3K9ac and H3K56ac, preventing release of NELFE from chromatin and causing transcriptional pausing. Involved in DNA repair by promoting double-strand break (DSB) repair: acts as a DSB sensor by recognizing and binding DSB sites, leading to (1) recruitment of DNA repair proteins, such as SMARCA5/SNF2H, and (2) deacetylation of histone H3K9ac and H3K56ac. SIRT6 participation to DSB repair is probably involved in extension of life span. Also promotes DNA repair by deacetylating non-histone proteins, such as DDB2 and p53/TP53. Specifically deacetylates H3K18ac at pericentric heterochromatin, thereby maintaining pericentric heterochromatin silencing at centromeres and protecting against genomic instability and cellular senescence. Involved in telomere maintenance by catalyzing deacetylation of histone H3 in telomeric chromatin, regulating telomere position effect and telomere movement in response to DNA damage. Required for embryonic stem cell differentiation by mediating histone deacetylation of H3K9ac. Plays a major role in metabolism by regulating processes such as glycolysis, gluconeogenesis, insulin secretion and lipid metabolism. Inhibits glycolysis via histone deacetylase activity and by acting as a corepressor of the transcription factor HIF1A, thereby controlling the expression of multiple glycolytic genes. Has tumor suppressor activity by repressing glycolysis, thereby inhibiting the Warburg effect. Also regulates glycolysis and tumorigenesis by mediating deacetylation and nuclear export of non-histone proteins, such as isoform M2 of PKM (PKM2). Acts as a negative regulator of gluconeogenesis by mediating deacetylation of non-histone proteins, such as FOXO1 and KAT2A/GCN5. Promotes beta-oxidation of fatty acids during fasting by catalyzing deacetylation of NCOA2, inducing coactivation of PPARA. Acts as a regulator of lipid catabolism in brown adipocytes, both by catalyzing deacetylation of histones and non-histone proteins, such as FOXO1. Also acts as a regulator of circadian rhythms, both by regulating expression of clock-controlled genes involved in lipid and carbohydrate metabolism, and by catalyzing deacetylation of PER2. The defatty-acylase activity is specifically involved in regulation of protein secretion. Has high activity toward long-chain fatty acyl groups and mediates protein-lysine demyristoylation and depalmitoylation of target proteins, such as RRAS2 and TNF, thereby regulating their secretion. Also acts as a mono-ADP-ribosyltransferase by mediating mono-ADP-ribosylation of PARP1, TRIM28/KAP1 or SMARCC2/BAF170. Mono-ADP-ribosyltransferase activity is involved in DNA repair, cellular senescence, repression of LINE-1 retrotransposon elements and regulation of transcription. The chain is NAD-dependent protein deacylase sirtuin-6 from Castor canadensis (American beaver).